We begin with the raw amino-acid sequence, 478 residues long: Ribosomal RNA small subunit methyltransferase F (478 aa).

Residues Ala123–Lys129, Glu147, Asp174, and Asp192 contribute to the S-adenosyl-L-methionine site. Catalysis depends on Cys245, which acts as the Nucleophile.

It belongs to the class I-like SAM-binding methyltransferase superfamily. RsmB/NOP family.

It localises to the cytoplasm. The enzyme catalyses cytidine(1407) in 16S rRNA + S-adenosyl-L-methionine = 5-methylcytidine(1407) in 16S rRNA + S-adenosyl-L-homocysteine + H(+). Functionally, specifically methylates the cytosine at position 1407 (m5C1407) of 16S rRNA. The chain is Ribosomal RNA small subunit methyltransferase F from Vibrio parahaemolyticus serotype O3:K6 (strain RIMD 2210633).